The following is a 662-amino-acid chain: Transmembrane 9 superfamily member 2 (662 aa).

The N-terminal stretch at 1-28 is a signal peptide; it reads MSSRPPASPPAQGSRLLLLSLLLLGTVP. The Lumenal segment spans residues 29 to 299; it reads GPRPGSAFYL…LESMPHTHIQ (271 aa). A helical transmembrane segment spans residues 300-320; it reads WFSIMNSLVIVLFLSGMVAMI. Residues 321–373 lie on the Cytoplasmic side of the membrane; sequence MLRTLHKDIARYNQMDSTEDAQEEFGWKLVHGDIFRPPRKGMLLSVFLGSGTQ. Residues 374-394 form a helical membrane-spanning segment; it reads ILIMTFVTLFFACLGFLSPAN. Over 395-397 the chain is Lumenal; it reads RGA. Residues 398-418 form a helical membrane-spanning segment; that stretch reads LMTCAVVLWVLLGTPAGYVAA. Topologically, residues 419-436 are cytoplasmic; that stretch reads RFYKSFGGEKWKTNVLLT. The helical transmembrane segment at 437 to 457 threads the bilayer; the sequence is SFLCPGIVFADFFIMNLILWG. Residues 458–465 lie on the Lumenal side of the membrane; that stretch reads EGSSAAIP. A helical membrane pass occupies residues 466–486; the sequence is FGTLVAILALWFCISVPLTFI. Topologically, residues 487 to 521 are cytoplasmic; sequence GAYFGFKKNAIEHPVRTNQIPRQIPEQSFYTKPLP. Residues 522–542 form a helical membrane-spanning segment; sequence GIIMGGILPFGCIFIQLFFIL. Topologically, residues 543-553 are lumenal; the sequence is NSIWSHQMYYM. A helical transmembrane segment spans residues 554-574; the sequence is FGFLFLVFIILVITCSEATIL. Residues 575–590 are Cytoplasmic-facing; sequence LCYFHLCAEDYHWQWR. A helical membrane pass occupies residues 591–611; the sequence is SFLTSGFTAVYFLIYAIHYFF. Residues 612 to 630 lie on the Lumenal side of the membrane; it reads SKLQITGTASTILYFGYTM. A helical membrane pass occupies residues 631-651; the sequence is IMVLIFFLFTGTIGFFACFWF. Residues 652–662 lie on the Cytoplasmic side of the membrane; the sequence is VTKIYSVVKVD.

This sequence belongs to the nonaspanin (TM9SF) (TC 9.A.2) family.

The protein resides in the endosome membrane. It is found in the golgi outpost. It localises to the cytoplasm. The protein localises to the cytoskeleton. Its subcellular location is the microtubule organizing center. Functionally, in the intracellular compartments, may function as a channel or small molecule transporter. This is Transmembrane 9 superfamily member 2 (Tm9sf2) from Mus musculus (Mouse).